Here is a 791-residue protein sequence, read N- to C-terminus: Disintegrin and metalloproteinase domain-containing protein 1a (791 aa).

Residues 1–65 form the signal peptide; that stretch reads MSVAAAGRGF…LLIFLPSTFC (65 aa). N-linked (GlcNAc...) asparagine glycosylation occurs at N72. Positions 201 to 220 are disordered; the sequence is CSVTPKDSPGDTSHPPRSRK. The region spanning 235–429 is the Peptidase M12B domain; it reads KYVEMFVVVN…HRGACLLDEP (195 aa). N256 carries an N-linked (GlcNAc...) asparagine glycan. 3 disulfide bridges follow: C345–C424, C385–C408, and C387–C393. H370 is a binding site for Zn(2+). Residue E371 is part of the active site. 2 residues coordinate Zn(2+): H374 and H380. N-linked (GlcNAc...) asparagine glycans are attached at residues N407 and N484. Residues 438–522 enclose the Disintegrin domain; sequence AANCGNGVVE…ECPANSYMQD (85 aa). A disulfide bridge connects residues C494 and C514. N-linked (GlcNAc...) asparagine glycosylation occurs at N630. Residues 663–697 form the EGF-like domain; sequence LQYNCEPQEMCHGNGVCNNFKHCHCDAGFAPPDCS. 3 disulfides stabilise this stretch: C667/C679, C673/C685, and C687/C696. A helical membrane pass occupies residues 741–761; that stretch reads VMVLVVPIFLVVLLCCLMLIA. Topologically, residues 762-791 are cytoplasmic; it reads YLWSEVQEVVSPPSSSESSSSSSWSDSDSQ. The disordered stretch occupies residues 772-791; it reads SPPSSSESSSSSSWSDSDSQ.

As to quaternary structure, heterodimer with ADAM2/fertilin subunit beta. As to expression, testis.

It is found in the membrane. Functionally, may be involved in sperm-egg fusion. The chain is Disintegrin and metalloproteinase domain-containing protein 1a (Adam1a) from Mus musculus (Mouse).